Consider the following 407-residue polypeptide: Peptidase T (407 aa).

H81 contributes to the Zn(2+) binding site. D83 is an active-site residue. D142 is a Zn(2+) binding site. E176 serves as the catalytic Proton acceptor. The Zn(2+) site is built by E177, D199, and H381.

This sequence belongs to the peptidase M20B family. The cofactor is Zn(2+).

The protein localises to the cytoplasm. The enzyme catalyses Release of the N-terminal residue from a tripeptide.. In terms of biological role, cleaves the N-terminal amino acid of tripeptides. The protein is Peptidase T of Streptococcus sanguinis (strain SK36).